The sequence spans 438 residues: Glutamyl-tRNA(Gln) amidotransferase subunit D (438 aa).

One can recognise an Asparaginase/glutaminase domain in the interval 92–422 (PDVTIIGTGG…EEVRRMMLTN (331 aa)). Catalysis depends on residues Thr-102, Thr-178, Asp-179, and Lys-256.

It belongs to the asparaginase 1 family. GatD subfamily. In terms of assembly, heterodimer of GatD and GatE.

The enzyme catalyses L-glutamyl-tRNA(Gln) + L-glutamine + ATP + H2O = L-glutaminyl-tRNA(Gln) + L-glutamate + ADP + phosphate + H(+). Its function is as follows. Allows the formation of correctly charged Gln-tRNA(Gln) through the transamidation of misacylated Glu-tRNA(Gln) in organisms which lack glutaminyl-tRNA synthetase. The reaction takes place in the presence of glutamine and ATP through an activated gamma-phospho-Glu-tRNA(Gln). The GatDE system is specific for glutamate and does not act on aspartate. The chain is Glutamyl-tRNA(Gln) amidotransferase subunit D from Pyrococcus horikoshii (strain ATCC 700860 / DSM 12428 / JCM 9974 / NBRC 100139 / OT-3).